A 1499-amino-acid chain; its full sequence is Condensin complex subunit 1 (1499 aa).

Disordered regions lie at residues 1–43 (MPRK…DGLS) and 1421–1499 (ITKN…MLDD). Over residues 1432–1446 (PTTMSGSSRTTSRAA) the composition is skewed to low complexity. Composition is skewed to acidic residues over residues 1458–1467 (SDEDDSDSDD) and 1486–1499 (ADDD…MLDD).

It belongs to the CND1 (condensin subunit 1) family. In terms of assembly, component of the condensin I complex, which contains the mix-1/SMC2 and smc-4/SMC4 heterodimer, and three non SMC subunits that probably regulate the complex: dpy-26, capg-1 and dpy-28. Within the complex, interacts with dpy-26 and smc-4. Component of the dosage compensation complex, which consist of the condensin I like components mix-1/SMC2 and dpy-27/SMC4, and the three non SMC subunits dpy-26, capg-1 and dpy-28. Within the complex, interacts with mix-1, dpy-27, dpy-26 and capg-1. Interacts with smcl-1. Post-translationally, sumoylated. Sumoylated in the context of the dosage compensation complex but not in the condensin I complex. Sumoylation is important for assembly of the dosage compensation complex and its robust binding to the X chromosome. In terms of tissue distribution, expressed in somatic and germline tissues (at protein level).

It is found in the nucleus. It localises to the chromosome. Functionally, required for both chromosome condensation and segregation during mitosis and meiosis and X-chromosome dosage compensation depending on its binding partners. Regulatory subunit of the condensin I complex, a complex required for conversion of interphase chromatin into mitotic-like condense chromosomes. The condensin I complex probably introduces positive supercoils into relaxed DNA in the presence of type I topoisomerases and converts nicked DNA into positive knotted forms in the presence of type II topoisomerases. The condensin I complex function is required for proper chromosome segregation in mitosis and meiosis. As a member of the condensin I complex, further controls the crossover number and distribution in meiosis by restricting double strand break formation, possibly by influencing higher-order chromosome structure. Plays a role in robust cytokinesis upon presence of chromatin obstructions. Also a member of the condensin I-like dosage compensation complex that associates specifically with hermaphrodite X chromosomes to reduce their gene transcription during interphase, possibly through chromatin reorganization. The chain is Condensin complex subunit 1 from Caenorhabditis elegans.